Consider the following 306-residue polypeptide: Homoserine kinase (306 aa).

Position 84-94 (84-94 (PAGLGLGSSGA)) interacts with ATP.

The protein belongs to the GHMP kinase family. Homoserine kinase subfamily.

It is found in the cytoplasm. The enzyme catalyses L-homoserine + ATP = O-phospho-L-homoserine + ADP + H(+). It functions in the pathway amino-acid biosynthesis; L-threonine biosynthesis; L-threonine from L-aspartate: step 4/5. Functionally, catalyzes the ATP-dependent phosphorylation of L-homoserine to L-homoserine phosphate. In Sulfurisphaera tokodaii (strain DSM 16993 / JCM 10545 / NBRC 100140 / 7) (Sulfolobus tokodaii), this protein is Homoserine kinase.